Reading from the N-terminus, the 127-residue chain is Small ribosomal subunit protein eS8 (127 aa).

The protein belongs to the eukaryotic ribosomal protein eS8 family. Part of the 30S ribosomal subunit.

This Pyrococcus horikoshii (strain ATCC 700860 / DSM 12428 / JCM 9974 / NBRC 100139 / OT-3) protein is Small ribosomal subunit protein eS8 (rps8e).